The sequence spans 250 residues: 5'-nucleotidase SurE (250 aa).

Residues Asp8, Asp9, Ser39, and Asn91 each contribute to the a divalent metal cation site.

Belongs to the SurE nucleotidase family. The cofactor is a divalent metal cation.

The protein resides in the cytoplasm. The enzyme catalyses a ribonucleoside 5'-phosphate + H2O = a ribonucleoside + phosphate. Nucleotidase that shows phosphatase activity on nucleoside 5'-monophosphates. The protein is 5'-nucleotidase SurE of Syntrophotalea carbinolica (strain DSM 2380 / NBRC 103641 / GraBd1) (Pelobacter carbinolicus).